Here is a 900-residue protein sequence, read N- to C-terminus: DNA mismatch repair protein MutS (900 aa).

637–644 (GPNMAGKS) provides a ligand contact to ATP.

Belongs to the DNA mismatch repair MutS family.

This protein is involved in the repair of mismatches in DNA. It is possible that it carries out the mismatch recognition step. This protein has a weak ATPase activity. This is DNA mismatch repair protein MutS from Methanosarcina mazei (strain ATCC BAA-159 / DSM 3647 / Goe1 / Go1 / JCM 11833 / OCM 88) (Methanosarcina frisia).